The primary structure comprises 156 residues: Small ribosomal subunit protein uS7 (156 aa).

This sequence belongs to the universal ribosomal protein uS7 family. As to quaternary structure, part of the 30S ribosomal subunit. Contacts proteins S9 and S11.

Functionally, one of the primary rRNA binding proteins, it binds directly to 16S rRNA where it nucleates assembly of the head domain of the 30S subunit. Is located at the subunit interface close to the decoding center, probably blocks exit of the E-site tRNA. The sequence is that of Small ribosomal subunit protein uS7 from Dechloromonas aromatica (strain RCB).